The chain runs to 410 residues: Venom metalloproteinase 2 (410 aa).

The first 22 residues, Met1 to Ser22, serve as a signal peptide directing secretion. N-linked (GlcNAc...) asparagine glycosylation is found at Asn64, Asn112, Asn187, Asn231, Asn292, and Asn307. The Peptidase M12B domain maps to Phe214–Ser410. His365 is a Zn(2+) binding site. The active site involves Glu366. Zn(2+) contacts are provided by His369 and His375. An N-linked (GlcNAc...) asparagine glycan is attached at Asn403.

In the C-terminal section; belongs to the venom metalloproteinase (M12B) family. As to quaternary structure, monomer. It depends on Zn(2+) as a cofactor. As to expression, expressed by the venom gland.

The protein resides in the secreted. With respect to regulation, the gelatinase activity is inhibited by EDTA. Functionally, the recombinant protein has gelatinase activity. In vivo, injection of this recombinant into fifth instar L.oleracea (host) larvae results in partial insect mortality associated with the molt to sixth instar, with surviving insects showing retarded development and growth. This is Venom metalloproteinase 2 from Eulophus pennicornis (Parasitoid wasp).